Consider the following 465-residue polypeptide: Ribulose bisphosphate carboxylase large chain (465 aa).

Lysine 4 carries the post-translational modification N6,N6,N6-trimethyllysine. Residues asparagine 113 and threonine 163 each contribute to the substrate site. The active-site Proton acceptor is lysine 165. A substrate-binding site is contributed by lysine 167. The Mg(2+) site is built by lysine 191, aspartate 193, and glutamate 194. An N6-carboxylysine modification is found at lysine 191. The active-site Proton acceptor is the histidine 284. Substrate-binding residues include arginine 285, histidine 317, and serine 369.

It belongs to the RuBisCO large chain family. Type I subfamily. Heterohexadecamer of 8 large chains and 8 small chains; disulfide-linked. The disulfide link is formed within the large subunit homodimers. Requires Mg(2+) as cofactor. The disulfide bond which can form in the large chain dimeric partners within the hexadecamer appears to be associated with oxidative stress and protein turnover.

Its subcellular location is the plastid. It localises to the chloroplast. It catalyses the reaction 2 (2R)-3-phosphoglycerate + 2 H(+) = D-ribulose 1,5-bisphosphate + CO2 + H2O. The catalysed reaction is D-ribulose 1,5-bisphosphate + O2 = 2-phosphoglycolate + (2R)-3-phosphoglycerate + 2 H(+). Its function is as follows. RuBisCO catalyzes two reactions: the carboxylation of D-ribulose 1,5-bisphosphate, the primary event in carbon dioxide fixation, as well as the oxidative fragmentation of the pentose substrate in the photorespiration process. Both reactions occur simultaneously and in competition at the same active site. The polypeptide is Ribulose bisphosphate carboxylase large chain (Cornus oblonga).